A 548-amino-acid polypeptide reads, in one-letter code: Glutamate--tRNA ligase (548 aa).

The short motif at 102–112 (PSPSGPLHIGH) is the 'HIGH' region element.

It belongs to the class-I aminoacyl-tRNA synthetase family. Glutamate--tRNA ligase type 2 subfamily.

It localises to the cytoplasm. It catalyses the reaction tRNA(Glu) + L-glutamate + ATP = L-glutamyl-tRNA(Glu) + AMP + diphosphate. Its function is as follows. Catalyzes the attachment of glutamate to tRNA(Glu) in a two-step reaction: glutamate is first activated by ATP to form Glu-AMP and then transferred to the acceptor end of tRNA(Glu). The protein is Glutamate--tRNA ligase of Thermoplasma acidophilum (strain ATCC 25905 / DSM 1728 / JCM 9062 / NBRC 15155 / AMRC-C165).